We begin with the raw amino-acid sequence, 29 residues long: Mycofactocin precursor peptide (29 aa).

The protein belongs to the mycofactocin precursor peptide family. In terms of processing, the post-translational modifications that lead to mycofactocin involve oxidative decarboxylation of the C-terminal tyrosine residue catalyzed by MftC, introduction of a tyramine-valine cross-link, removal of the modified C-terminal dipeptide by MftE. The released dipeptide then undergoes oxidative deamination by MftD, glycosylation by MftF and methylation by an unknown enzyme.

Its function is as follows. Precursor peptide that leads to mycofactocin (MFT) after extensive post-translational modifications by enzymes encoded by adjacent genes. Mycofactocin acts as a redox cofactor of nicotinamide-dependent oxidoreductases encoded in the same locus. The polypeptide is Mycofactocin precursor peptide (Mycobacterium tuberculosis (strain ATCC 25618 / H37Rv)).